We begin with the raw amino-acid sequence, 194 residues long: dTTP/UTP pyrophosphatase (194 aa).

Asp66 acts as the Proton acceptor in catalysis.

It belongs to the Maf family. YhdE subfamily. A divalent metal cation is required as a cofactor.

Its subcellular location is the cytoplasm. The enzyme catalyses dTTP + H2O = dTMP + diphosphate + H(+). It carries out the reaction UTP + H2O = UMP + diphosphate + H(+). Functionally, nucleoside triphosphate pyrophosphatase that hydrolyzes dTTP and UTP. May have a dual role in cell division arrest and in preventing the incorporation of modified nucleotides into cellular nucleic acids. This Anaeromyxobacter dehalogenans (strain 2CP-1 / ATCC BAA-258) protein is dTTP/UTP pyrophosphatase.